The following is a 243-amino-acid chain: Endochitinase (243 aa).

3 disulfides stabilise this stretch: C23–C85, C97–C105, and C223–C236. The Proton donor role is filled by E67.

It is found in the vacuole. It catalyses the reaction Random endo-hydrolysis of N-acetyl-beta-D-glucosaminide (1-&gt;4)-beta-linkages in chitin and chitodextrins.. Defense against chitin-containing fungal pathogens. Shows activity on chitin, tetra-N-acetylglucosamine and chitosan. The chain is Endochitinase from Carica papaya (Papaya).